The primary structure comprises 207 residues: Ribosomal RNA small subunit methyltransferase G (207 aa).

S-adenosyl-L-methionine-binding positions include Gly71, Phe76, 122–123 (AE), and Arg135.

Belongs to the methyltransferase superfamily. RNA methyltransferase RsmG family.

It is found in the cytoplasm. Specifically methylates the N7 position of a guanine in 16S rRNA. This chain is Ribosomal RNA small subunit methyltransferase G, found in Cytophaga hutchinsonii (strain ATCC 33406 / DSM 1761 / CIP 103989 / NBRC 15051 / NCIMB 9469 / D465).